The primary structure comprises 342 residues: MTLGYIGSYTKKSGKGIYRFKLNDETGVIEALETGYEIEASTYLTRNESFLYAITKEGEECGVASFSIKEDGQLELINKCLESKQGTGCYIQVSSNGKYLFEAVYGAGLARIYKLNQITGAIEKLIEELAHEFPTGSHERQDSSHVHFLNETPDHKYVVATDLGTDRVVTYKFGEDGLKQYAVSQFKNSDGPRHIAFSNDGRHAYIVHELSNEVSVTEYQDGKFIELERHSTIPSDFNGESKLAAVRLSHDGKHLYISNRGHDSIAIFEVLEDGRSLRSIEIQPSYDAFPRDFNITESDNYLICAHQEGESKVSIFERDNITGKLSLKDKKAIANEGVCVLL.

The protein belongs to the cycloisomerase 2 family.

This is an uncharacterized protein from Staphylococcus epidermidis (strain ATCC 12228 / FDA PCI 1200).